The chain runs to 172 residues: Stellate protein CG33238 (172 aa).

This sequence belongs to the casein kinase 2 subunit beta family. As to quaternary structure, interacts in vitro with the casein kinase 2 alpha subunit (CkII-alpha). The relevance of such interaction is however unclear in vivo. Probably not expressed in wild-type flies. In males lacking the Y chromosome, it is testis-specific and constitutes the main component of star-shaped crystals.

In terms of biological role, unknown. In males lacking the Y chromosome, its strong overexpression leads to the appearance of proteinaceous star-shaped crystals in the primary spermatocytes causing meiotic drive, possibly by interfering with normal casein kinase 2 activity. The sequence is that of Stellate protein CG33238 (Ste:CG33238) from Drosophila melanogaster (Fruit fly).